The sequence spans 382 residues: 1-deoxy-D-xylulose 5-phosphate reductoisomerase (382 aa).

Positions 10, 11, 12, 13, 38, and 120 each coordinate NADPH. Lysine 121 is a 1-deoxy-D-xylulose 5-phosphate binding site. Glutamate 122 serves as a coordination point for NADPH. Aspartate 146 is a Mn(2+) binding site. Residues serine 147, glutamate 148, serine 172, and histidine 195 each coordinate 1-deoxy-D-xylulose 5-phosphate. A Mn(2+)-binding site is contributed by glutamate 148. Position 201 (glycine 201) interacts with NADPH. The 1-deoxy-D-xylulose 5-phosphate site is built by serine 208, asparagine 213, lysine 214, and glutamate 217. Residue glutamate 217 participates in Mn(2+) binding.

Belongs to the DXR family. It depends on Mg(2+) as a cofactor. Requires Mn(2+) as cofactor.

The enzyme catalyses 2-C-methyl-D-erythritol 4-phosphate + NADP(+) = 1-deoxy-D-xylulose 5-phosphate + NADPH + H(+). It participates in isoprenoid biosynthesis; isopentenyl diphosphate biosynthesis via DXP pathway; isopentenyl diphosphate from 1-deoxy-D-xylulose 5-phosphate: step 1/6. Its function is as follows. Catalyzes the NADPH-dependent rearrangement and reduction of 1-deoxy-D-xylulose-5-phosphate (DXP) to 2-C-methyl-D-erythritol 4-phosphate (MEP). The protein is 1-deoxy-D-xylulose 5-phosphate reductoisomerase of Thermoanaerobacter sp. (strain X514).